The sequence spans 384 residues: 8-amino-7-oxononanoate synthase (384 aa).

Substrate is bound at residue Arg21. Gly108–Phe109 contributes to the pyridoxal 5'-phosphate binding site. His133 contacts substrate. 3 residues coordinate pyridoxal 5'-phosphate: Ser179, His207, and Thr233. N6-(pyridoxal phosphate)lysine is present on Lys236. Substrate is bound at residue Thr352.

It belongs to the class-II pyridoxal-phosphate-dependent aminotransferase family. BioF subfamily. Homodimer. It depends on pyridoxal 5'-phosphate as a cofactor.

The catalysed reaction is 6-carboxyhexanoyl-[ACP] + L-alanine + H(+) = (8S)-8-amino-7-oxononanoate + holo-[ACP] + CO2. It participates in cofactor biosynthesis; biotin biosynthesis. Its function is as follows. Catalyzes the decarboxylative condensation of pimeloyl-[acyl-carrier protein] and L-alanine to produce 8-amino-7-oxononanoate (AON), [acyl-carrier protein], and carbon dioxide. This is 8-amino-7-oxononanoate synthase from Escherichia coli O6:K15:H31 (strain 536 / UPEC).